A 96-amino-acid chain; its full sequence is Mitochondrial import inner membrane translocase subunit Tim13-B (96 aa).

Residues 47-70 (CFRKCIGKPGGSLDNSEQKCVAMC) carry the Twin CX3C motif motif. Intrachain disulfides connect C47–C70 and C51–C66.

This sequence belongs to the small Tim family. As to quaternary structure, heterohexamer; composed of 3 copies of TIMM8 (TIMM8A or TIMM8B) and 3 copies of TIMM13, named soluble 70 kDa complex. Associates with the TIM22 complex, whose core is composed of TIMM22.

It localises to the mitochondrion inner membrane. In terms of biological role, mitochondrial intermembrane chaperone that participates in the import and insertion of some multi-pass transmembrane proteins into the mitochondrial inner membrane. Also required for the transfer of beta-barrel precursors from the TOM complex to the sorting and assembly machinery (SAM complex) of the outer membrane. Acts as a chaperone-like protein that protects the hydrophobic precursors from aggregation and guide them through the mitochondrial intermembrane space. The TIMM8-TIMM13 complex mediates the import of some proteins while the predominant TIMM9-TIMM10 70 kDa complex mediates the import of much more proteins. The protein is Mitochondrial import inner membrane translocase subunit Tim13-B (timm13-b) of Xenopus laevis (African clawed frog).